The primary structure comprises 195 residues: Probable molybdenum cofactor guanylyltransferase (195 aa).

Residues 6–8 (LAG), K18, D67, and D93 each bind GTP. D93 contributes to the Mg(2+) binding site.

It belongs to the MobA family. Mg(2+) is required as a cofactor.

It is found in the cytoplasm. It catalyses the reaction Mo-molybdopterin + GTP + H(+) = Mo-molybdopterin guanine dinucleotide + diphosphate. Functionally, transfers a GMP moiety from GTP to Mo-molybdopterin (Mo-MPT) cofactor (Moco or molybdenum cofactor) to form Mo-molybdopterin guanine dinucleotide (Mo-MGD) cofactor. This chain is Probable molybdenum cofactor guanylyltransferase, found in Thermococcus sibiricus (strain DSM 12597 / MM 739).